The sequence spans 938 residues: Chaperone protein ClpD1, chloroplastic (938 aa).

The N-terminal 83 residues, 1-83, are a transit peptide targeting the chloroplast; sequence MEVCCCSTSS…FERFTERAVK (83 aa). Repeat regions lie at residues 84–145 and 159–224; these read AVVL…TPGA and FSGS…LQAE. The Clp R domain occupies 84–224; the sequence is AVVLSQREAK…SVALTRLQAE (141 aa). Positions 234–255 are disordered; the sequence is GASSFKVPKKSPAGAGRSAFSK. The segment at 266–519 is i; sequence LDQFCLDLTT…RMESFNRKKE (254 aa). ATP is bound by residues 311–318 and 660–667; these read GEAGVGKT and GPTGVGKT. Positions 586–777 are II; that stretch reads VGTEEIARVA…LIVMTSNIGS (192 aa).

This sequence belongs to the ClpA/ClpB family. ClpD subfamily. As to expression, expressed in stems, culms and leaves.

It is found in the plastid. The protein resides in the chloroplast. Molecular chaperone that may function in heat stress response. May interact with a ClpP-like protease involved in degradation of denatured proteins in the chloroplast. Chaperone involved in response to abiotic stresses. Plays a positive role during dehydration and salt stress. This chain is Chaperone protein ClpD1, chloroplastic, found in Oryza sativa subsp. japonica (Rice).